Consider the following 51-residue polypeptide: Lysis protein for colicin A (51 aa).

Residues 1 to 18 (MKKIIICVILLAIMLLAA) form the signal peptide. A lipid anchor (N-palmitoyl cysteine) is attached at Cys-19. Cys-19 carries S-diacylglycerol cysteine lipidation. The tract at residues 27–51 (TGGGSVSPSSIVTGVSMGSDGVGNP) is disordered.

It localises to the cell outer membrane. Lysis proteins are required for both colicin release and partial cell lysis. The sequence is that of Lysis protein for colicin A (cal) from Citrobacter freundii.